The following is a 2768-amino-acid chain: Thyroglobulin (2768 aa).

The N-terminal stretch at 1–19 (MALVLEIFTLLASICWVSA) is a signal peptide. The residue at position 24 (Tyr-24) is an Iodotyrosine; alternate. Position 24 is a sulfotyrosine; alternate (Tyr-24). A Thyroxine; alternate modification is found at Tyr-24. Tyr-24 bears the Triiodothyronine; alternate mark. Thyroglobulin type-1 domains lie at 31-92 (LRPC…PVAC), 93-160 (LSFC…PKRC), 161-297 (PRSC…RFRC), and 298-358 (PTKC…PPSC). 18 disulfide bridges follow: Cys-34–Cys-52, Cys-63–Cys-70, Cys-72–Cys-92, Cys-96–Cys-120, Cys-131–Cys-138, Cys-140–Cys-160, Cys-164–Cys-183, Cys-194–Cys-235, Cys-237–Cys-297, Cys-301–Cys-319, Cys-330–Cys-336, Cys-338–Cys-358, Cys-364–Cys-620, Cys-408–Cys-608, Cys-631–Cys-636, Cys-638–Cys-658, Cys-662–Cys-687, and Cys-698–Cys-703. N-linked (GlcNAc...) asparagine glycosylation occurs at Asn-76. Iodotyrosine is present on Tyr-108. N-linked (GlcNAc...) asparagine glycosylation occurs at Asn-110. Tyr-149 is modified (iodotyrosine; alternate). Tyr-149 bears the Diiodotyrosine; alternate mark. Asn-198 carries N-linked (GlcNAc...) asparagine glycosylation. An iodotyrosine mark is found at Tyr-234 and Tyr-258. N-linked (GlcNAc...) asparagine glycans are attached at residues Asn-484 and Asn-529. The tract at residues 521–545 (PLSVGLDSNSSTGTPEAAKKDGTMN) is disordered. 6 Thyroglobulin type-1 domains span residues 605 to 658 (SQTC…QPRC), 659 to 726 (PTDC…PKKC), 727 to 921 (PTPC…LPTC), 922 to 1073 (PGSC…IPQC), 1074 to 1145 (PTTC…SAQC), and 1146 to 1210 (PSLC…QPAC). Tyr-704 bears the Iodotyrosine; alternate mark. At Tyr-704 the chain carries Thyroxine; alternate. Tyr-704 carries the post-translational modification Triiodothyronine; alternate. Diiodotyrosine; alternate is present on Tyr-704. Cystine bridges form between Cys-705–Cys-726, Cys-730–Cys-763, Cys-774–Cys-898, Cys-900–Cys-921, Cys-925–Cys-1031, Cys-1042–Cys-1049, Cys-1051–Cys-1073, Cys-1077–Cys-1108, Cys-1126–Cys-1145, Cys-1149–Cys-1169, Cys-1181–Cys-1188, Cys-1190–Cys-1210, Cys-1215–Cys-1264, Cys-1231–Cys-1245, Cys-1306–Cys-1356, and Cys-1331–Cys-1347. The N-linked (GlcNAc...) asparagine glycan is linked to Asn-748. An Iodotyrosine modification is found at Tyr-785. Residue Asn-816 is glycosylated (N-linked (GlcNAc...) asparagine). Iodotyrosine; alternate is present on Tyr-866. At Tyr-866 the chain carries Diiodotyrosine; alternate. Tyr-883 carries the diiodotyrosine modification. N-linked (GlcNAc...) asparagine glycosylation occurs at Asn-947. Tyr-992 is subject to Iodotyrosine; alternate. Position 992 is a diiodotyrosine; alternate (Tyr-992). A glycan (N-linked (GlcNAc...) asparagine) is linked at Asn-1220. An Iodotyrosine modification is found at Tyr-1310. A Thyroxine modification is found at Tyr-1310. N-linked (GlcNAc...) asparagine glycans are attached at residues Asn-1348, Asn-1349, and Asn-1365. Intrachain disulfides connect Cys-1440-Cys-1459, Cys-1462-Cys-1473, Cys-1476-Cys-1490, Cys-1493-Cys-1510, Cys-1514-Cys-1523, Cys-1543-Cys-1565, Cys-1603-Cys-1627, Cys-1607-Cys-1613, and Cys-1639-Cys-1662. 3 Type II repeats span residues 1456–1469 (GLGCVKCPEGSYSQ), 1470–1486 (DEECIPCPVGFYQEQAG), and 1487–1503 (SLACVPCPVGRTTISAG). Residue Tyr-1467 is modified to Iodotyrosine; alternate. A Diiodotyrosine; alternate modification is found at Tyr-1467. A Thyroglobulin type-1 11 domain is found at 1511–1565 (VTDCQRNEAGLQCDQNGQYRASQKDRGSGKAFCVDGEGRRLPWWETEAPLEDSQC). One copy of the Type IIIA repeat lies at 1603–1723 (CLTDCTEDEA…GANLTDAHLF (121 aa)). N-linked (GlcNAc...) asparagine glycosylation is present at Asn-1716. Disulfide bonds link Cys-1724-Cys-1749, Cys-1728-Cys-1734, Cys-1733-Cys-1835, and Cys-1760-Cys-1777. One copy of the Type IIIB repeat lies at 1724–1892 (CLLACDRDLC…LFSAQQANLW (169 aa)). N-linked (GlcNAc...) asparagine glycans are attached at residues Asn-1774 and Asn-1869. Intrachain disulfides connect Cys-1893–Cys-1919, Cys-1897–Cys-1904, Cys-1928–Cys-1939, Cys-1996–Cys-2024, Cys-2000–Cys-2006, Cys-2005–Cys-2076, and Cys-2035–Cys-2048. Residues 1893-1995 (CLSRCVQEHS…EKSISNGFFE (103 aa)) form a Type IIIA repeat. The Type IIIB repeat unit spans residues 1996–2129 (CERRCDADPC…TSNFSAVRDL (134 aa)). The N-linked (GlcNAc...) asparagine glycan is linked to Asn-2013. Residue Asn-2122 is glycosylated (N-linked (GlcNAc...) asparagine). Cystine bridges form between Cys-2130/Cys-2154, Cys-2134/Cys-2140, and Cys-2163/Cys-2172. The stretch at 2130-2187 (CLSECSQHEACLITTLQTQPGAVRCMFYADTQSCTHSLQGQNCRLLLREEATHIYRKP) is one Type IIIA repeat. Tyr-2184 carries the post-translational modification Iodotyrosine. The segment at 2188 to 2768 (GISLLSYEAS…QEPGSKTYSK (581 aa)) is cholinesterase-like (ChEL). The N-linked (GlcNAc...) asparagine glycan is linked to Asn-2250. Cys-2264 and Cys-2281 are joined by a disulfide. The N-linked (GlcNAc...) asparagine glycan is linked to Asn-2295. The cysteines at positions 2442 and 2453 are disulfide-linked. The residue at position 2540 (Tyr-2540) is an Iodotyrosine. Tyr-2573 carries the post-translational modification Iodotyrosine; alternate. Residue Tyr-2573 is modified to Thyroxine; alternate. Triiodothyronine; alternate is present on Tyr-2573. Diiodotyrosine; alternate is present on Tyr-2573. N-linked (GlcNAc...) asparagine glycosylation occurs at Asn-2582. 2 positions are modified to iodotyrosine: Tyr-2587 and Tyr-2617. A disulfide bond links Cys-2591 and Cys-2715. Residue Tyr-2697 is modified to Diiodotyrosine. Residues 2727–2768 (TSADGAKGGQSAESEEEELTAGSGLREDLLSLQEPGSKTYSK) form a disordered region. O-linked (Xyl...) (chondroitin sulfate) serine glycosylation is present at Ser-2749. Tyr-2766 carries the post-translational modification Iodotyrosine; alternate. Tyr-2766 carries the post-translational modification Thyroxine; alternate. Tyr-2766 carries the post-translational modification Triiodothyronine; alternate. Tyr-2766 is subject to Diiodotyrosine; alternate.

The protein belongs to the type-B carboxylesterase/lipase family. Monomer. Homodimer (via ChEL region); occurs in the endoplasmic reticulum and is required for export to the Golgi apparatus. Homooligomer; disulfide-linked; stored in this form in the thyroid follicle lumen. Iodinated on tyrosine residues by TPO. There are 4 pairs of iodinated tyrosines used for coupling: acceptor Tyr-24 is coupled to donor Tyr-149 or Tyr-234, acceptor Tyr-2573 is coupled to donor Tyr-2540, acceptor Tyr-2766 in monomer 1 is coupled to donor Tyr-2766 in monomer 2 and acceptor Tyr-1310 in monomer 1 is coupled to donor Tyr-108 in monomer 2. In terms of processing, sulfated tyrosines are desulfated during iodination. Post-translationally, undergoes sequential proteolysis by cathepsins to release thyroxine (T4) and triiodothyronine (T3) hormones. In the thyroid follicle lumen, cross-linked TG (storage form) is solubilized by limited proteolysis mediated by cathepsins CTSB and/or CTSL. Partially cleaved TG is further processed by CTSK/cathepsin K and/or CTSL resulting in the release of T4. Following endocytosis, further processing occurs leading to the release of T3 and more T4 hormones. Specifically expressed in the thyroid gland.

It localises to the secreted. Functionally, acts as a substrate for the production of iodinated thyroid hormones thyroxine (T4) and triiodothyronine (T3). The synthesis of T3 and T4 involves iodination of selected tyrosine residues of TG/thyroglobulin followed by their oxidative coupling in the thyroid follicle lumen. Following TG re-internalization and lysosomal-mediated proteolysis, T3 and T4 are released from the polypeptide backbone leading to their secretion into the bloodstream. One dimer produces 7 thyroid hormone molecules. This chain is Thyroglobulin, found in Homo sapiens (Human).